The chain runs to 21 residues: MLDGVVARPQEXAARYYAAGY.

Its function is as follows. Involved in etamycin biosynthesis. This is Hydroxypicolinic acid-activating enzyme from Streptomyces griseoviridis.